The sequence spans 360 residues: Peptide chain release factor 1 (360 aa).

Gln237 is subject to N5-methylglutamine.

This sequence belongs to the prokaryotic/mitochondrial release factor family. In terms of processing, methylated by PrmC. Methylation increases the termination efficiency of RF1.

Its subcellular location is the cytoplasm. In terms of biological role, peptide chain release factor 1 directs the termination of translation in response to the peptide chain termination codons UAG and UAA. This chain is Peptide chain release factor 1, found in Ectopseudomonas mendocina (strain ymp) (Pseudomonas mendocina).